The chain runs to 60 residues: Truncated protein A35 homolog (60 aa).

The protein belongs to the chordopoxvirinae A35 protein family.

This chain is Truncated protein A35 homolog (A38R), found in Variola virus (isolate Human/India/Ind3/1967) (VARV).